Consider the following 224-residue polypeptide: UPF0173 metal-dependent hydrolase TTHA1283 (224 aa).

Belongs to the UPF0173 family.

The polypeptide is UPF0173 metal-dependent hydrolase TTHA1283 (Thermus thermophilus (strain ATCC 27634 / DSM 579 / HB8)).